Reading from the N-terminus, the 138-residue chain is Large ribosomal subunit protein bL17 (138 aa).

The protein belongs to the bacterial ribosomal protein bL17 family. As to quaternary structure, part of the 50S ribosomal subunit. Contacts protein L32.

The chain is Large ribosomal subunit protein bL17 from Phenylobacterium zucineum (strain HLK1).